Consider the following 233-residue polypeptide: Large ribosomal subunit protein uL2 (233 aa).

Residues 194–233 (HPHGGGNHQHVGRPSTVGRGTPPGRKVGRLSPKRRKKYGR) form a disordered region. The segment covering 219 to 233 (KVGRLSPKRRKKYGR) has biased composition (basic residues).

The protein belongs to the universal ribosomal protein uL2 family. In terms of assembly, part of the 50S ribosomal subunit. Forms a bridge to the 30S subunit in the 70S ribosome.

Its function is as follows. One of the primary rRNA binding proteins. Required for association of the 30S and 50S subunits to form the 70S ribosome, for tRNA binding and peptide bond formation. It has been suggested to have peptidyltransferase activity; this is somewhat controversial. Makes several contacts with the 16S rRNA in the 70S ribosome. The protein is Large ribosomal subunit protein uL2 of Picrophilus torridus (strain ATCC 700027 / DSM 9790 / JCM 10055 / NBRC 100828 / KAW 2/3).